A 625-amino-acid polypeptide reads, in one-letter code: DNA mismatch repair protein MutL (625 aa).

The protein belongs to the DNA mismatch repair MutL/HexB family.

This protein is involved in the repair of mismatches in DNA. It is required for dam-dependent methyl-directed DNA mismatch repair. May act as a 'molecular matchmaker', a protein that promotes the formation of a stable complex between two or more DNA-binding proteins in an ATP-dependent manner without itself being part of a final effector complex. This chain is DNA mismatch repair protein MutL, found in Xanthomonas axonopodis pv. citri (strain 306).